A 132-amino-acid polypeptide reads, in one-letter code: Small ribosomal subunit protein uS11 (132 aa).

It belongs to the universal ribosomal protein uS11 family. As to quaternary structure, part of the 30S ribosomal subunit. Interacts with proteins S7 and S18. Binds to IF-3.

In terms of biological role, located on the platform of the 30S subunit, it bridges several disparate RNA helices of the 16S rRNA. Forms part of the Shine-Dalgarno cleft in the 70S ribosome. This Chlamydia trachomatis serovar A (strain ATCC VR-571B / DSM 19440 / HAR-13) protein is Small ribosomal subunit protein uS11.